The chain runs to 131 residues: Profilin-2 (131 aa).

It belongs to the profilin family. Occurs in many kinds of cells as a complex with monomeric actin in a 1:1 ratio.

It is found in the cytoplasm. Its subcellular location is the cytoskeleton. Binds to actin and affects the structure of the cytoskeleton. At high concentrations, profilin prevents the polymerization of actin, whereas it enhances it at low concentrations. By binding to PIP2, it inhibits the formation of IP3 and DG. The polypeptide is Profilin-2 (Lilium longiflorum (Trumpet lily)).